The sequence spans 447 residues: Glutamate--tRNA ligase 1 (447 aa).

The short motif at 10–20 (PSPTGMLHVGN) is the 'HIGH' region element. The 'KMSKS' region motif lies at 240-244 (KISKR). Position 243 (lysine 243) interacts with ATP.

This sequence belongs to the class-I aminoacyl-tRNA synthetase family. Glutamate--tRNA ligase type 1 subfamily. As to quaternary structure, monomer.

It is found in the cytoplasm. It carries out the reaction tRNA(Glu) + L-glutamate + ATP = L-glutamyl-tRNA(Glu) + AMP + diphosphate. In terms of biological role, catalyzes the attachment of glutamate to tRNA(Glu) in a two-step reaction: glutamate is first activated by ATP to form Glu-AMP and then transferred to the acceptor end of tRNA(Glu). The sequence is that of Glutamate--tRNA ligase 1 from Rickettsia akari (strain Hartford).